The following is a 147-amino-acid chain: Myoglobin (147 aa).

The 140-residue stretch at 2 to 141 (ADFDAVLKFW…VIADLEANYK (140 aa)) folds into the Globin domain. Position 60 (H60) interacts with nitrite. H60 contributes to the O2 binding site. Residue H89 participates in heme b binding.

The protein belongs to the globin family. As to quaternary structure, monomeric.

The protein localises to the cytoplasm. It localises to the sarcoplasm. It carries out the reaction Fe(III)-heme b-[protein] + nitric oxide + H2O = Fe(II)-heme b-[protein] + nitrite + 2 H(+). The catalysed reaction is H2O2 + AH2 = A + 2 H2O. Monomeric heme protein which primary function is to store oxygen and facilitate its diffusion within muscle tissues. Reversibly binds oxygen through a pentacoordinated heme iron and enables its timely and efficient release as needed during periods of heightened demand. Depending on the oxidative conditions of tissues and cells, and in addition to its ability to bind oxygen, it also has a nitrite reductase activity whereby it regulates the production of bioactive nitric oxide. Under stress conditions, like hypoxia and anoxia, it also protects cells against reactive oxygen species thanks to its pseudoperoxidase activity. This chain is Myoglobin (mb), found in Sarda chiliensis (Pacific bonito).